We begin with the raw amino-acid sequence, 274 residues long: Cytochrome b-c1 complex subunit Rieske, mitochondrial (274 aa).

Topologically, residues 79 to 103 are mitochondrial matrix; sequence SHTDIKVPDFSDYRRAEVLDSTKSS. A helical transmembrane segment spans residues 104–140; it reads KESSEARKGFSYLVTATTTVGVAYAAKNAVSQFVSSM. At 141-274 the chain is on the mitochondrial intermembrane side; the sequence is SASADVLAMS…FTSGDVVVVG (134 aa). The Rieske domain maps to 187-272; the sequence is EAAVEVSQLR…YEFTSGDVVV (86 aa). Cys-217, His-219, Cys-236, His-239, and Ser-241 together coordinate [2Fe-2S] cluster. Cys-222 and Cys-238 are oxidised to a cystine.

The protein belongs to the Rieske iron-sulfur protein family. As to quaternary structure, component of the ubiquinol-cytochrome c oxidoreductase (cytochrome b-c1 complex, complex III, CIII), a multisubunit enzyme composed of 11 subunits. The complex is composed of 3 respiratory subunits cytochrome b, cytochrome c1 and Rieske protein UQCRFS1, 2 core protein subunits UQCRC1/QCR1 and UQCRC2/QCR2, and 6 low-molecular weight protein subunits UQCRH/QCR6, UQCRB/QCR7, UQCRQ/QCR8, UQCR10/QCR9, UQCR11/QCR10 and subunit 9, the cleavage product of Rieske protein UQCRFS1. The complex exists as an obligatory dimer and forms supercomplexes (SCs) in the inner mitochondrial membrane with NADH-ubiquinone oxidoreductase (complex I, CI) and cytochrome c oxidase (complex IV, CIV), resulting in different assemblies (supercomplex SCI(1)III(2)IV(1) and megacomplex MCI(2)III(2)IV(2)). Incorporation of the Rieske protein UQCRFS1 is the penultimate step in complex III assembly. Interacts with TTC19, which is involved in the clearance of UQCRFS1 fragments. Component of the ubiquinol-cytochrome c oxidoreductase (cytochrome b-c1 complex, complex III, CIII). Subunit 9 corresponds to the mitochondrial targeting sequence (MTS) of Rieske protein UQCRFS1. It is retained after processing and incorporated inside complex III, where it remains bound to the complex and localizes between the 2 core subunits UQCRC1/QCR1 and UQCRC2/QCR2. [2Fe-2S] cluster serves as cofactor. In terms of processing, proteolytic processing is necessary for the correct insertion of UQCRFS1 in the complex III dimer. Several fragments are generated during UQCRFS1 insertion, most probably due to the endogenous matrix-processing peptidase (MPP) activity of the 2 core protein subunits UQCRC1/QCR1 and UQCRC2/QCR2, which are homologous to the 2 mitochondrial-processing peptidase (MPP) subunits beta-MPP and alpha-MPP respectively. The action of the protease is also necessary for the clearance of the UQCRFS1 fragments.

The protein resides in the mitochondrion inner membrane. It carries out the reaction a quinol + 2 Fe(III)-[cytochrome c](out) = a quinone + 2 Fe(II)-[cytochrome c](out) + 2 H(+)(out). In terms of biological role, component of the ubiquinol-cytochrome c oxidoreductase, a multisubunit transmembrane complex that is part of the mitochondrial electron transport chain which drives oxidative phosphorylation. The respiratory chain contains 3 multisubunit complexes succinate dehydrogenase (complex II, CII), ubiquinol-cytochrome c oxidoreductase (cytochrome b-c1 complex, complex III, CIII) and cytochrome c oxidase (complex IV, CIV), that cooperate to transfer electrons derived from NADH and succinate to molecular oxygen, creating an electrochemical gradient over the inner membrane that drives transmembrane transport and the ATP synthase. The cytochrome b-c1 complex catalyzes electron transfer from ubiquinol to cytochrome c, linking this redox reaction to translocation of protons across the mitochondrial inner membrane, with protons being carried across the membrane as hydrogens on the quinol. In the process called Q cycle, 2 protons are consumed from the matrix, 4 protons are released into the intermembrane space and 2 electrons are passed to cytochrome c. The Rieske protein is a catalytic core subunit containing a [2Fe-2S] iron-sulfur cluster. It cycles between 2 conformational states during catalysis to transfer electrons from the quinol bound in the Q(0) site in cytochrome b to cytochrome c1. Incorporation of UQCRFS1 is the penultimate step in complex III assembly. Functionally, component of the ubiquinol-cytochrome c oxidoreductase (cytochrome b-c1 complex, complex III, CIII). UQCRFS1 undergoes proteolytic processing once it is incorporated in the complex III dimer. One of the fragments, called subunit 9, corresponds to its mitochondrial targeting sequence (MTS). The proteolytic processing is necessary for the correct insertion of UQCRFS1 in the complex III dimer, but the persistence of UQCRFS1-derived fragments may prevent newly imported UQCRFS1 to be processed and assembled into complex III and is detrimental for the complex III structure and function. In Rattus norvegicus (Rat), this protein is Cytochrome b-c1 complex subunit Rieske, mitochondrial (Uqcrfs1).